The following is a 91-amino-acid chain: Small ribosomal subunit protein uS15c (91 aa).

This sequence belongs to the universal ribosomal protein uS15 family. In terms of assembly, part of the 30S ribosomal subunit.

The protein localises to the plastid. The protein resides in the chloroplast. The polypeptide is Small ribosomal subunit protein uS15c (rps15) (Phalaenopsis aphrodite subsp. formosana (Moth orchid)).